The following is a 491-amino-acid chain: Transcription factor unc-3 (491 aa).

An interaction with DNA region spans residues 66-69 (RKSN). The C5-type zinc-finger motif lies at 154–173 (CRVLLTHEVMCSRCCEKKSC). Interaction with DNA stretches follow at residues 200-207 (NCLKNAGN) and 239-242 (NNSK). Residues 240-261 (NSKHGRRTKRTDASDDSEYSES) are disordered. Residues 269-355 (PVIKALFPSE…SRGTPLRFSY (87 aa)) enclose the IPT/TIG domain.

Belongs to the COE family. As to quaternary structure, may homodimerise. Interacts with jmjd-3.1. May interact with GFI1 homolog pag-3.

The protein localises to the nucleus. Transcription factor. Involved in motor neuron fate determination and maintenance, acting as an activator of gene expression in a subset of motor neurons. May act in concert with GFI1 homolog pag-3 in motor neuron fate determination. Required to maintain the expression of transcriptional repressors bnc-1 and cfi-1, which play roles in the cell fate of motor neurons. May play a role in the expression of proteins essential for axonal pathfinding and/or neuronal differentiation in both sensory and motor neurons. Cooperates with jmjd-3.1 and wdr-5.1 to ensure robust transdifferentiation of the Y rectal cell to the PDA motor neuron during larval development. The sequence is that of Transcription factor unc-3 (unc-3) from Caenorhabditis elegans.